The primary structure comprises 206 residues: Thymidylate kinase (206 aa).

Residue 11 to 18 (GPEGAGKT) participates in ATP binding.

Belongs to the thymidylate kinase family.

It carries out the reaction dTMP + ATP = dTDP + ADP. Functionally, phosphorylation of dTMP to form dTDP in both de novo and salvage pathways of dTTP synthesis. This Deinococcus radiodurans (strain ATCC 13939 / DSM 20539 / JCM 16871 / CCUG 27074 / LMG 4051 / NBRC 15346 / NCIMB 9279 / VKM B-1422 / R1) protein is Thymidylate kinase (tmk).